We begin with the raw amino-acid sequence, 273 residues long: Gamma-glutamyl cyclotransferase aclK (273 aa).

Belongs to the class-I pyridoxal-phosphate-dependent aminotransferase family.

It carries out the reaction an alpha-(gamma-L-glutamyl)-L-amino acid = 5-oxo-L-proline + an L-alpha-amino acid. It participates in mycotoxin biosynthesis. Gamma-glutamyl cyclotransferase; part of the gene cluster that mediates the biosynthesis of aspirochlorine (or antibiotic A30641), an unusual halogenated spiro compound with distinctive antifungal properties due to selective inhibition of protein biosynthesis, and which is also active against bacteria, viruses, and murine tumor cells. The non-ribosomal peptide synthetase (NRPS) aclP is responsible the formation of the diketopiperazine (DKP) core from the condensation of 2 phenylalanine residues. One Phe residue is tailored into chlorotyrosine by hydroxylation and chlorination, whereas the second Phe undergoes an unprecedented C-C bond cleavage to be converted into glycine. After formation of the DKP, sulfur is incorporated into the DKP by conjugation with glutathione by aclG, followed by its stepwise degradation to the thiol by aclI, aclJ and aclK, and the dithiol oxidation by aclT. In addition, oxygenases (aclB, aclC, aclL and aclO) and O-methyltransferases (aclM and aclU) act as tailoring enzymes to produce the intermediate dechloroaspirochlorine. Ultimately, chlorination of dechloroaspirochlorine by the halogenase aclH is the last step in the aspirochlorine pathway. This chain is Gamma-glutamyl cyclotransferase aclK, found in Aspergillus oryzae (strain ATCC 42149 / RIB 40) (Yellow koji mold).